The chain runs to 1123 residues: Leucine-rich repeat receptor-like protein kinase PEPR1 (1123 aa).

The first 28 residues, 1 to 28 (MKNLGGLFKILLLFFCLFLSTHIISVSC), serve as a signal peptide directing secretion. Topologically, residues 29–769 (LNSDGLTLLS…SRKSGLSTWQ (741 aa)) are extracellular. The stretch at 31-53 (SDGLTLLSLLKHLDRVPPQVTST) is one LRR 1 repeat. Asn57, Asn81, Asn110, and Asn121 each carry an N-linked (GlcNAc...) asparagine glycan. LRR repeat units follow at residues 74–98 (SKNV…IGEL), 99–122 (KSLQ…LGNC), 124–145 (KLAT…TLDS), 146–170 (LKRL…LFRI), 171–194 (PKLQ…IGDA), 196–218 (ELVE…IGNS), and 219–243 (SSLQ…NLLG). Asn182 and Asn217 each carry an N-linked (GlcNAc...) asparagine glycan. Residues Asn244, Asn252, Asn289, Asn302, Asn316, Asn321, and Asn337 are each glycosylated (N-linked (GlcNAc...) asparagine). LRR repeat units lie at residues 245–266 (LTTL…SPNC), 267–290 (KNLL…LGNC), 292–314 (SLDA…LGML), 315–338 (KNLT…LGNC), 340–362 (SLNL…LGKL), 363–386 (RKLE…IWKS), 388–410 (SLTQ…MTEM), 412–434 (KLKI…LGVN), 435–458 (SSLE…LCHG), 459–482 (RKLR…IGHC), 484–505 (TIRR…FSQD), 506–529 (HSLS…LGSC), 530–553 (KNLS…LGNL), 554–577 (QNLG…LSNC), 579–600 (SLER…NFSN), 601–625 (WKGL…LPEL), 626–650 (KKLS…GLIE), 652–674 (LIYD…LGDL), 675–696 (IKLT…VLKG), and 697–721 (LTSL…LEGQ). N-linked (GlcNAc...) asparagine glycans are attached at residues Asn398, Asn420, and Asn434. Asn494 is a glycosylation site (N-linked (GlcNAc...) asparagine). N-linked (GlcNAc...) asparagine glycans are attached at residues Asn531, Asn536, Asn560, Asn591, and Asn597. N-linked (GlcNAc...) asparagine glycosylation is found at Asn681 and Asn686. Asn745 carries an N-linked (GlcNAc...) asparagine glycan. Residues 770-790 (IVLIAVLSSLLVLVVVLALVF) traverse the membrane as a helical segment. Over 791-1123 (ICLRRRKGRP…ARSCSSDSVR (333 aa)) the chain is Cytoplasmic. Thr824 carries the phosphothreonine modification. The region spanning 827 to 1115 (LNEKYTIGRG…LLEDVKHLAR (289 aa)) is the Protein kinase domain. ATP is bound by residues 833–841 (IGRGAHGIV) and Lys855. 2 positions are modified to phosphotyrosine: Tyr901 and Tyr941. Asp954 functions as the Proton acceptor in the catalytic mechanism. Position 995 is a phosphotyrosine (Tyr995).

It belongs to the protein kinase superfamily. Ser/Thr protein kinase family. Interacts with PEP1 and BAK1. Interacts with BIK1 and PBL1. In terms of processing, N-glycosylated.

Its subcellular location is the cell membrane. The enzyme catalyses L-seryl-[protein] + ATP = O-phospho-L-seryl-[protein] + ADP + H(+). The catalysed reaction is L-threonyl-[protein] + ATP = O-phospho-L-threonyl-[protein] + ADP + H(+). Functionally, acts as a receptor for PEP defense peptides. Unlike typical immune receptors, senses an endogenous elicitor that potentiates pathogen-associated molecular pattern (PAMP)-inducible plant responses. Involved in PAMP-triggered immunity (PTI) signaling. Interacts with and phosphorylates the kinase BIK1, a central rate-limiting kinase in PTI signaling. In Arabidopsis thaliana (Mouse-ear cress), this protein is Leucine-rich repeat receptor-like protein kinase PEPR1 (PEPR1).